A 103-amino-acid chain; its full sequence is Small ribosomal subunit protein uS14c (103 aa).

Residues 26 to 56 are disordered; that stretch reads SSKKKIRSKVSPLSLSEKTKMQEKLQSLPRN.

Belongs to the universal ribosomal protein uS14 family. Part of the 30S ribosomal subunit.

It is found in the plastid. It localises to the chloroplast. Binds 16S rRNA, required for the assembly of 30S particles. The chain is Small ribosomal subunit protein uS14c from Saccharum officinarum (Sugarcane).